Here is a 198-residue protein sequence, read N- to C-terminus: RNA 2',3'-cyclic phosphodiesterase (198 aa).

The active-site Proton donor is the His-39. Short sequence motifs (HXTX) lie at residues 39 to 42 and 130 to 133; these read HLTL and HITL. His-130 acts as the Proton acceptor in catalysis.

This sequence belongs to the 2H phosphoesterase superfamily. ThpR family.

It catalyses the reaction a 3'-end 2',3'-cyclophospho-ribonucleotide-RNA + H2O = a 3'-end 2'-phospho-ribonucleotide-RNA + H(+). Hydrolyzes RNA 2',3'-cyclic phosphodiester to an RNA 2'-phosphomonoester. This is RNA 2',3'-cyclic phosphodiesterase from Thermus thermophilus (strain ATCC 27634 / DSM 579 / HB8).